Consider the following 138-residue polypeptide: MPNFSGNWKIIRSENFEEMLKALGVNMMMRKIAVAAASKPAVEIKQENDTFYIKTSTTVRTTEINFKIGEEFEEQTVDGRPCKSLVKWESGNKMVCEQRLLKGEGPKTSWSRELTNDGELILTMTADDVVCTRVYVRE.

Positions 21–31 match the Nuclear localization signal motif; sequence KALGVNMMMRK. A Glycyl lysine isopeptide (Lys-Gly) (interchain with G-Cter in SUMO) cross-link involves residue Lys-102. All-trans-retinoate is bound at residue 133–135; the sequence is RVY.

It belongs to the calycin superfamily. Fatty-acid binding protein (FABP) family. In terms of assembly, interacts with importin alpha. Interacts with RXR and RARA. Sumoylated in response to retinoic acid binding, sumoylation is critical for dissociation from ER and subsequent nuclear translocation. Embryo and skin of adult mouse.

The protein resides in the cytoplasm. It localises to the endoplasmic reticulum. The protein localises to the nucleus. In terms of biological role, transports retinoic acid to the nucleus. Regulates the access of retinoic acid to the nuclear retinoic acid receptors. The polypeptide is Cellular retinoic acid-binding protein 2 (Crabp2) (Mus musculus (Mouse)).